We begin with the raw amino-acid sequence, 248 residues long: tRNA (guanine-N(1)-)-methyltransferase (248 aa).

S-adenosyl-L-methionine is bound by residues glycine 117 and 137–142 (IGDFVL).

The protein belongs to the RNA methyltransferase TrmD family. As to quaternary structure, homodimer.

It localises to the cytoplasm. It carries out the reaction guanosine(37) in tRNA + S-adenosyl-L-methionine = N(1)-methylguanosine(37) in tRNA + S-adenosyl-L-homocysteine + H(+). Specifically methylates guanosine-37 in various tRNAs. This Polynucleobacter necessarius subsp. necessarius (strain STIR1) protein is tRNA (guanine-N(1)-)-methyltransferase.